The chain runs to 294 residues: Putative isocitrate dehydrogenase [NAD] subunit-like 4 (294 aa).

The protein belongs to the isocitrate and isopropylmalate dehydrogenases family.

Functionally, performs an essential role in the oxidative function of the citric acid cycle. The polypeptide is Putative isocitrate dehydrogenase [NAD] subunit-like 4 (IDH4) (Arabidopsis thaliana (Mouse-ear cress)).